Reading from the N-terminus, the 100-residue chain is MAEMITEAAILTQQAAQFDQIASGLSQERNFVDSIGQSFQNTWEGQAASAALGALGRFDEAMQDQIRQLESIVDKLNRSGGNYTKTDDEANQLLSSKMNF.

The protein belongs to the WXG100 family. CFP-10 subfamily. In terms of assembly, forms a tight 1:1 complex with EsxA.

Its subcellular location is the secreted. A secreted protein that might play a role in virulence. Might serve as a chaperone to prevent uncontrolled membrane lysis by its partner EsxA. The sequence is that of ESAT-6-like protein EsxB (esxB) from Mycobacterium leprae (strain TN).